Reading from the N-terminus, the 1386-residue chain is YLP motif-containing protein 1 (1386 aa).

Disordered stretches follow at residues 1 to 336 and 517 to 1068; these read MYPN…EDAR and TSIP…PPGR. Pro residues predominate over residues 14 to 27; it reads YPPPPVPPPPPPVA. Composition is skewed to low complexity over residues 31-50 and 59-80; these read ASPG…SSSG and LAQL…LQPH. 5 stretches are compositionally biased toward pro residues: residues 81 to 93, 102 to 114, 148 to 158, 166 to 176, and 184 to 203; these read HLPP…PPVM, QPPP…PPGP, PESPPVPPGSY, MPPPQPPPSYY, and YLPP…PPSI. Residues 237–259 show a composition bias toward polar residues; that stretch reads STMTPQEQQQYWYRQHLLSLQQR. Residues 260–270 are compositionally biased toward basic residues; it reads TKVHLPGHKKG. The span at 276–285 shows a compositional bias: basic and acidic residues; that stretch reads DVPEPIKEEA. The segment covering 302 to 317 has biased composition (pro residues); that stretch reads PPLPPPNEEAPPPLSP. The segment covering 320 to 333 has biased composition (acidic residues); it reads PQSEDSEDSEDSEE. 3 stretches are compositionally biased toward pro residues: residues 517–558, 566–603, and 641–650; these read TSIP…PPPA, PVLP…PQGM, and PPSPYHPPPQ. Polar residues predominate over residues 651–667; that stretch reads SEQVNSKPLNKVFSSEQ. At lysine 683 the chain carries N6-methyllysine. The segment covering 706-722 has biased composition (basic and acidic residues); that stretch reads RGPREQKEQLQKLKDFG. A compositionally biased stretch (pro residues) spans 746-761; it reads MYPPPGSYRPPPPMGK. The segment covering 762-779 has biased composition (low complexity); it reads PPGSIVRPSAPPARSSIP. 2 stretches are compositionally biased toward pro residues: residues 781–803 and 848–878; these read TRPP…PPPV and PVLP…PPPV. Residue lysine 894 forms a Glycyl lysine isopeptide (Lys-Gly) (interchain with G-Cter in SUMO2) linkage. Composition is skewed to basic and acidic residues over residues 904–938, 945–1014, 1023–1033, and 1049–1068; these read ITLR…EPYF, TDHR…DRPP, GERRTYPEERM, and RVEK…PPGR. Residue lysine 951 forms a Glycyl lysine isopeptide (Lys-Gly) (interchain with G-Cter in SUMO2) linkage. Residues 1336-1343 form an involved in interaction with PPP1CA region; it reads KKRVRWAD.

As to quaternary structure, interacts with PPP1CA and NCOA5. Forms a complex with ILF2, ILF3, KHDRBS1, RBMX, NCOA5 and PPP1CA.

It localises to the nucleus. Its subcellular location is the nucleus speckle. Functionally, plays a role in the reduction of telomerase activity during differentiation of embryonic stem cells by binding to the core promoter of TERT and controlling its down-regulation. The protein is YLP motif-containing protein 1 (Ylpm1) of Mus musculus (Mouse).